Consider the following 98-residue polypeptide: MSGNPGSSLSALRPTPPERGSFPLDHDGECTKYMQEYLKCMQLVQNENAMNCRLLAKDYLRCRMDHQLMDYDEWSHLGLPEDAPGNNGKTIKDATDNK.

A compositionally biased stretch (polar residues) spans 1–10 (MSGNPGSSLS). Positions 1–25 (MSGNPGSSLSALRPTPPERGSFPLD) are disordered. In terms of domain architecture, CHCH spans 27 to 70 (DGECTKYMQEYLKCMQLVQNENAMNCRLLAKDYLRCRMDHQLMD). Short sequence motifs (cx9C motif) lie at residues 30 to 40 (CTKYMQEYLKC) and 52 to 62 (CRLLAKDYLRC). 2 disulfide bridges follow: cysteine 30–cysteine 62 and cysteine 40–cysteine 52. Residues 76–98 (HLGLPEDAPGNNGKTIKDATDNK) are disordered.

This sequence belongs to the COX19 family.

It is found in the cytoplasm. The protein resides in the mitochondrion intermembrane space. In terms of biological role, required for the assembly of mitochondrial cytochrome c oxidase. The polypeptide is Cytochrome c oxidase assembly protein COX19 (COX19) (Saccharomyces cerevisiae (strain ATCC 204508 / S288c) (Baker's yeast)).